The chain runs to 233 residues: Phytol kinase (233 aa).

Helical transmembrane passes span M9–L29, V56–F76, V96–F118, L122–G144, F172–V192, and N213–G233.

This sequence belongs to the polyprenol kinase family.

Its subcellular location is the cell membrane. The catalysed reaction is phytol + CTP = phytyl phosphate + CDP + H(+). It functions in the pathway cofactor biosynthesis; tocopherol biosynthesis. Catalyzes the CTP-dependent phosphorylation of phytol to phytylmonophosphate (PMP). Can also use UTP as an alternative phosphate donor, but not ATP or GTP. Is involved in tocopherol biosynthesis, via the utilization of phytol generated by chlorophyll degradation. Also plays a significant but not critical role in the recycling of phytol for the biosynthesis of new chlorophyll molecules. The chain is Phytol kinase from Synechocystis sp. (strain ATCC 27184 / PCC 6803 / Kazusa).